The following is a 180-amino-acid chain: Large ribosomal subunit protein uL6 (180 aa).

This sequence belongs to the universal ribosomal protein uL6 family. In terms of assembly, part of the 50S ribosomal subunit.

This protein binds to the 23S rRNA, and is important in its secondary structure. It is located near the subunit interface in the base of the L7/L12 stalk, and near the tRNA binding site of the peptidyltransferase center. This Clostridium beijerinckii (strain ATCC 51743 / NCIMB 8052) (Clostridium acetobutylicum) protein is Large ribosomal subunit protein uL6.